Reading from the N-terminus, the 34-residue chain is Mu-theraphotoxin-Pspp1 (34 aa).

Cystine bridges form between Cys2–Cys17, Cys9–Cys22, and Cys16–Cys29. At Phe34 the chain carries Phenylalanine amide.

It belongs to the neurotoxin 10 (Hwtx-1) family. As to expression, expressed by the venom gland.

The protein localises to the secreted. Its function is as follows. Voltage-gated sodium channel inhibitor. It is unclear if it selectively inhibits Nav1.7/SCN9A or shows similar potency on all sodium channels tested. According to Escoubas et al., 2006 and Nicolas et al., 2019, it is selective over Nav1.7/SCN9A (90% inhibition at 1 uM), versus Nav1.4 and Nav1.6 (35% inhibition), and shows a small inhibition on all other sodium channels (except Nav1.8/SCN10A). According to Goncalves et al., 2019, it shows a similar inhibition on almost all sodium channels tested (Nav1.1/SCN1A (IC(50)=280.3 nM), Nav1.2/SCN2A (IC(50)=73.7 nM), Nav1.3/SCN3A (IC(50)=201.5 nM), Nav1.4/SCN4A (IC(50)&gt;2100 nM), Nav1.5/SCN5A (IC(50)=710.6 nM), Nav1.6/SCN8A (IC(50)=491.2 nM), and Nav1.7/SCN9A (IC(50)=254.3-260 nM)), except Nav1.8/SCN10A. The voltage-dependence of steady-state Nav1.7/SCN9A channel activation and inactivation are not affected, suggesting that is does not act as a gating-modifier toxin but rather blocks or impedes ion flux through the channel pore. The toxin effect is partial and poorly reversible. In addition to its inhibition to sodium channels, it also shows a small inhibition on rat Kv3.4/KCNC4 potassium channels (20% inhibition at 1 uM). In vivo, when tested on pain models, it shows analgesic activity. The sequence is that of Mu-theraphotoxin-Pspp1 from Phlogiellus sp. (Tarantula).